We begin with the raw amino-acid sequence, 130 residues long: Large ribosomal subunit protein eL34 (130 aa).

Residues 111 to 130 form a disordered region; that stretch reads KPVSKPPKIQKTAKAASKSK.

Belongs to the eukaryotic ribosomal protein eL34 family.

The protein is Large ribosomal subunit protein eL34 (RpL34) of Aedes albopictus (Asian tiger mosquito).